A 467-amino-acid chain; its full sequence is Gamma-aminobutyric acid receptor subunit gamma-3 (467 aa).

The signal sequence occupies residues 1–17; sequence MAPKLLLLLCLFSGLHA. The Extracellular portion of the chain corresponds to 18–256; the sequence is RSRKVEEDEY…FELSRRMGYF (239 aa). Residue Asn-110 is glycosylated (N-linked (GlcNAc...) asparagine). The cysteines at positions 171 and 185 are disulfide-linked. Asn-228 carries an N-linked (GlcNAc...) asparagine glycan. Residues 257–277 form a helical membrane-spanning segment; sequence TIQTYIPCILTVVLSWVSFWI. Residues 278–283 are Cytoplasmic-facing; sequence KKDATP. The chain crosses the membrane as a helical span at residues 284 to 303; sequence ARTALGITTVLTMTTLSTIA. The Extracellular segment spans residues 304–311; sequence RKSLPRVS. Residues 312–332 form a helical membrane-spanning segment; sequence YVTAMDLFVTVCFLFVFAALM. Residues 333 to 446 lie on the Cytoplasmic side of the membrane; sequence EYATLNYYSS…DILELDSYSR (114 aa). The helical transmembrane segment at 447–467 threads the bilayer; sequence VFFPTSFLLFNLVYWVGYLYL.

Belongs to the ligand-gated ion channel (TC 1.A.9) family. Gamma-aminobutyric acid receptor (TC 1.A.9.5) subfamily. GABRG3 sub-subfamily. In terms of assembly, heteropentamer, formed by a combination of alpha (GABRA1-6), beta (GABRB1-3), gamma (GABRG1-3), delta (GABRD), epsilon (GABRE), rho (GABRR1-3), pi (GABRP) and theta (GABRQ) chains, each subunit exhibiting distinct physiological and pharmacological properties. May be palmitoylated. As to expression, expressed in brain.

The protein resides in the postsynaptic cell membrane. Its subcellular location is the cell membrane. The enzyme catalyses chloride(in) = chloride(out). Its function is as follows. Gamma subunit of the heteropentameric ligand-gated chloride channel gated by gamma-aminobutyric acid (GABA), a major inhibitory neurotransmitter in the brain. GABA-gated chloride channels, also named GABA(A) receptors (GABAAR), consist of five subunits arranged around a central pore and contain GABA active binding site(s) located at the alpha and beta subunit interface(s). When activated by GABA, GABAARs selectively allow the flow of chloride across the cell membrane down their electrochemical gradient. This Homo sapiens (Human) protein is Gamma-aminobutyric acid receptor subunit gamma-3.